The following is a 432-amino-acid chain: MPAIVLIGAQWGDEGKGKATDLLGGRVQWVVRYQGGNNAGHTVVLPTGENFALHLIPSGVLTPGVTNVIGNGVVVDPGVLLDELKGLEDRGVDTSRLLISADAHLLLPYHVAIDKVTERYMGNKKIGTTGRGIGPCYQDKIARIGIRVADVLDREVLTHKIEAALELKNQILVKIYNRKALDPHQVVECLLEQAEGFRHRIADTRLLLNTALEAGETVLLEGSQGTLLDVDHGTYPYVTSSNPTAGGAAVGSGIGPTRITAVLGILKAYTTRVGSGPFPTELFDENGEYLSKTGGEFGVTTGRRRRCGWFDAVVARYATRVNGITDFFLTKLDVLSSLETVPVCVGYRIDGARINEMPMTQSDLHRAEPIYEELPGWWEDISAAREFDDLPAKARDYVLRLEELAGAHVSCIGVGPGREQTIVRRDILAARP.

Residues Gly12–Lys18 and Gly40–Thr42 contribute to the GTP site. The active-site Proton acceptor is Asp13. Asp13 and Gly40 together coordinate Mg(2+). IMP-binding positions include Asp13–Lys16, Asn38–His41, Thr129, Arg143, Gln224, Thr239, and Arg303. His41 acts as the Proton donor in catalysis. Val299–Arg305 is a substrate binding site. GTP-binding positions include Arg305, Lys331 to Asp333, and Gly413 to Gly415.

This sequence belongs to the adenylosuccinate synthetase family. In terms of assembly, homodimer. Mg(2+) is required as a cofactor.

The protein resides in the cytoplasm. The catalysed reaction is IMP + L-aspartate + GTP = N(6)-(1,2-dicarboxyethyl)-AMP + GDP + phosphate + 2 H(+). It participates in purine metabolism; AMP biosynthesis via de novo pathway; AMP from IMP: step 1/2. In terms of biological role, plays an important role in the de novo pathway of purine nucleotide biosynthesis. Catalyzes the first committed step in the biosynthesis of AMP from IMP. This is Adenylosuccinate synthetase from Mycobacterium avium (strain 104).